Reading from the N-terminus, the 483-residue chain is MTEPLDWRFSQTFGGKGNEDASDANVVPAIEFDQTGDFIAVGDKGGKVLLLKRTHDKQSSKKSKLPEYRFYSEFQSHEPEFDYLKSLEIEEKINKIKWCPKQNDAQFLLTTNDKTIKLWKVYEKKIKQVSTSATTTGPSYNGSLASNNTRSPSHTTYIYNSSGAHNMNNNMNNSNNNNNLNNFKIPKLTTRETVVTATPRKIFQNAHAYHINSISLNSDGETYISSDDLRIHLWNLNINTECFNVVDIKPTNMEDLTEVITSAEFHPTSCNIFMYSSSKGTIKLGDLRSSALCDNHAKVFEEYEDPSNKSFFSEIISSISDIKFSRDGRYILSRDFLTLKLWDINMENKPVKTIQIHDYLKPKLCDLYENDCIFDKFECTLNHDGTQMLTGSYHNYLHIYDRNSKQDVCLEASKQATKSKTKTLTTKMKLRSSKKEPKKPEDIHPDAIEYTKKTLHCAWHPKDNLIAVGAANTVYLYAATENK.

WD repeat units lie at residues 22-61 (SDAN…QSSK) and 88-129 (EIEE…IKQV). Residues 132-152 (SATTTGPSYNGSLASNNTRSP) are disordered. WD repeat units lie at residues 206-244 (AHAY…ECFN), 255-295 (DLTE…LCDN), 314-352 (EIIS…KPVK), and 369-410 (ENDC…DVCL). A disordered region spans residues 421–443 (TKTLTTKMKLRSSKKEPKKPEDI). Over residues 433–443 (SKKEPKKPEDI) the composition is skewed to basic and acidic residues. Residues 449–483 (EYTKKTLHCAWHPKDNLIAVGAANTVYLYAATENK) form a WD 7 repeat.

The protein belongs to the phosphatase 2A regulatory subunit B family. As to quaternary structure, PP2A consists of a trimeric holoenzyme, composed of a 37 kDa catalytic subunit (C subunit) and a 65 kDa constant regulatory subunit (A subunit), that associates with a variety of regulatory subunits (B subunit) such as phr2AB (B55) and psrA (B56 homolog). The trimer may partially dissociates into a core 'AC' dimer equally active compared to the trimer.

Its subcellular location is the cytoplasm. It localises to the cytosol. It is found in the cytoskeleton. The protein resides in the microtubule organizing center. The protein localises to the centrosome. The B regulatory subunit might modulate substrate selectivity and catalytic activity, and might also direct the localization of the catalytic enzyme to a particular subcellular compartment. The sequence is that of Serine/threonine-protein phosphatase 2A regulatory subunit phr2AB (phr2aB) from Dictyostelium discoideum (Social amoeba).